The primary structure comprises 265 residues: uncharacterized protein (265 aa).

Disordered regions lie at residues 162 to 183 (VTKKNASNSNGNEGTLTVNNDQ) and 196 to 239 (AKTN…DKEI). Polar residues-rich tracts occupy residues 165 to 183 (KNASNSNGNEGTLTVNNDQ) and 213 to 233 (QSTSLIQLKEGSANTTEGNAS).

This sequence belongs to the MG185/MG260 family.

This is an uncharacterized protein from Mycoplasma pneumoniae (strain ATCC 29342 / M129 / Subtype 1) (Mycoplasmoides pneumoniae).